The primary structure comprises 348 residues: Protein RecA (348 aa).

Position 65–72 (65–72 (GPESSGKT)) interacts with ATP.

This sequence belongs to the RecA family.

Its subcellular location is the cytoplasm. Can catalyze the hydrolysis of ATP in the presence of single-stranded DNA, the ATP-dependent uptake of single-stranded DNA by duplex DNA, and the ATP-dependent hybridization of homologous single-stranded DNAs. It interacts with LexA causing its activation and leading to its autocatalytic cleavage. In Saccharophagus degradans (strain 2-40 / ATCC 43961 / DSM 17024), this protein is Protein RecA.